A 371-amino-acid chain; its full sequence is tRNA-specific 2-thiouridylase MnmA (371 aa).

Residues 13–20 and Met39 each bind ATP; that span reads GMSGGVDS. The tract at residues 99-101 is interaction with target base in tRNA; that stretch reads NPD. Cys104 (nucleophile) is an active-site residue. A disulfide bridge connects residues Cys104 and Cys200. Position 128 (Gly128) interacts with ATP. Positions 150 to 152 are interaction with tRNA; sequence KDQ. Cys200 serves as the catalytic Cysteine persulfide intermediate. Residues 308 to 309 are interaction with tRNA; sequence RY.

It belongs to the MnmA/TRMU family.

Its subcellular location is the cytoplasm. It catalyses the reaction S-sulfanyl-L-cysteinyl-[protein] + uridine(34) in tRNA + AH2 + ATP = 2-thiouridine(34) in tRNA + L-cysteinyl-[protein] + A + AMP + diphosphate + H(+). Its function is as follows. Catalyzes the 2-thiolation of uridine at the wobble position (U34) of tRNA, leading to the formation of s(2)U34. This Listeria monocytogenes serovar 1/2a (strain ATCC BAA-679 / EGD-e) protein is tRNA-specific 2-thiouridylase MnmA.